A 1025-amino-acid polypeptide reads, in one-letter code: Kinesin-like protein KIN-14P (1025 aa).

2 disordered regions span residues 1–87 (MNPM…MHHG) and 263–286 (YSQI…NEEE). The span at 15–28 (STPRSPFSPFSPLS) shows a compositional bias: low complexity. Residues 29 to 41 (VDDRHRNHADTKT) show a composition bias toward basic and acidic residues. Low complexity predominate over residues 42–53 (PRSPFSPFSPLS). Over residues 65–75 (KFQQALASSGQ) the composition is skewed to polar residues. Residues 203 to 425 (HEIATQQLRQ…REMEKKSESN (223 aa)) are a coiled coil. Basic and acidic residues predominate over residues 270–286 (TKTEKSKWEEQKKNEEE). The region spanning 509–838 (NIRVFCRVRP…LKFAERVSGV (330 aa)) is the Kinesin motor domain. An ATP-binding site is contributed by 593–600 (GQTGSGKT). Residues 847 to 879 (KEGKDVRDLMEQLASLKDTIARKDEEIERLQHQ) are a coiled coil. Disordered stretches follow at residues 881-926 (QRLQ…SAEA), 939-977 (AASM…RPLD), and 994-1025 (TGLT…KRWA). Composition is skewed to polar residues over residues 901 to 913 (SDTG…SRYS) and 939 to 948 (AASMGTQGSI). Over residues 950 to 962 (VTKRPPRISDRAK) the composition is skewed to basic and acidic residues. Composition is skewed to low complexity over residues 963 to 974 (SVTAKSSTSVTR) and 998 to 1016 (SSSK…STSS).

Belongs to the TRAFAC class myosin-kinesin ATPase superfamily. Kinesin family. KIN-14 subfamily.

The protein is Kinesin-like protein KIN-14P of Arabidopsis thaliana (Mouse-ear cress).